Consider the following 422-residue polypeptide: ATP-dependent RNA helicase RhlB (422 aa).

Residues 9 to 37 (QKFSDFALHPLVIKAIENQGFYHCTPIQA) carry the Q motif motif. The 180-residue stretch at 40 to 219 (FPITLAGRDV…FEQMNHPEYI (180 aa)) folds into the Helicase ATP-binding domain. 53–60 (AQTGTGKT) contacts ATP. A DEAD box motif is present at residues 165-168 (DEAD). Positions 245-390 (RLLQTLIEEE…TSEYNKEALL (146 aa)) constitute a Helicase C-terminal domain. The disordered stretch occupies residues 394-422 (PQPKRLQRHHRHYAGSRNQGASRKPRSPQ). Residues 398–407 (RLQRHHRHYA) show a composition bias toward basic residues.

The protein belongs to the DEAD box helicase family. RhlB subfamily. As to quaternary structure, component of the RNA degradosome, which is a multiprotein complex involved in RNA processing and mRNA degradation.

The protein resides in the cytoplasm. The enzyme catalyses ATP + H2O = ADP + phosphate + H(+). In terms of biological role, DEAD-box RNA helicase involved in RNA degradation. Has RNA-dependent ATPase activity and unwinds double-stranded RNA. This Hamiltonella defensa subsp. Acyrthosiphon pisum (strain 5AT) protein is ATP-dependent RNA helicase RhlB.